A 510-amino-acid chain; its full sequence is Light-independent protochlorophyllide reductase subunit B (510 aa).

[4Fe-4S] cluster is bound at residue aspartate 36. The Proton donor role is filled by aspartate 296. 431-432 (GM) lines the substrate pocket.

This sequence belongs to the ChlB/BchB/BchZ family. In terms of assembly, protochlorophyllide reductase is composed of three subunits; ChlL, ChlN and ChlB. Forms a heterotetramer of two ChlB and two ChlN subunits. It depends on [4Fe-4S] cluster as a cofactor.

It catalyses the reaction chlorophyllide a + oxidized 2[4Fe-4S]-[ferredoxin] + 2 ADP + 2 phosphate = protochlorophyllide a + reduced 2[4Fe-4S]-[ferredoxin] + 2 ATP + 2 H2O. It participates in porphyrin-containing compound metabolism; chlorophyll biosynthesis (light-independent). In terms of biological role, component of the dark-operative protochlorophyllide reductase (DPOR) that uses Mg-ATP and reduced ferredoxin to reduce ring D of protochlorophyllide (Pchlide) to form chlorophyllide a (Chlide). This reaction is light-independent. The NB-protein (ChlN-ChlB) is the catalytic component of the complex. The polypeptide is Light-independent protochlorophyllide reductase subunit B (Synechococcus sp. (strain JA-3-3Ab) (Cyanobacteria bacterium Yellowstone A-Prime)).